The primary structure comprises 70 residues: UPF0519 protein D (70 aa).

Belongs to the UPF0519 family.

This Dictyostelium discoideum (Social amoeba) protein is UPF0519 protein D.